We begin with the raw amino-acid sequence, 87 residues long: Translation initiation factor IF-1 2 (87 aa).

One can recognise an S1-like domain in the interval 1–72 (MAADDHIEME…TKGRIARRTT (72 aa)). The tract at residues 65–87 (GRIARRTTTPSGGPRPARSGNRR) is disordered.

Belongs to the IF-1 family. In terms of assembly, component of the 30S ribosomal translation pre-initiation complex which assembles on the 30S ribosome in the order IF-2 and IF-3, IF-1 and N-formylmethionyl-tRNA(fMet); mRNA recruitment can occur at any time during PIC assembly.

The protein resides in the cytoplasm. Functionally, one of the essential components for the initiation of protein synthesis. Stabilizes the binding of IF-2 and IF-3 on the 30S subunit to which N-formylmethionyl-tRNA(fMet) subsequently binds. Helps modulate mRNA selection, yielding the 30S pre-initiation complex (PIC). Upon addition of the 50S ribosomal subunit IF-1, IF-2 and IF-3 are released leaving the mature 70S translation initiation complex. In Nitratidesulfovibrio vulgaris (strain ATCC 29579 / DSM 644 / CCUG 34227 / NCIMB 8303 / VKM B-1760 / Hildenborough) (Desulfovibrio vulgaris), this protein is Translation initiation factor IF-1 2.